The primary structure comprises 227 residues: MTNNLSGYRNKFVRVKTSKKRTVSSGNWLRRQLNDPYVAKARIEGFRSRAAYKLLEIHEKFKLFTPNMKIVDLGAAPGGWSQVASKLIKASDNSLNNKIISIDLLEIEPIIGVEFLQKDFFEENTEELIIQVLDGKADIVMSDMASNTTGHKATDHIRTLLLCEQAFEFALKVLKPSGHFIAKIFRGGAENELLNKVKCEFKTVKHFKPSSSRSESTEIYLVAINKK.

S-adenosyl-L-methionine contacts are provided by Gly-78, Trp-80, Asp-103, Asp-119, and Asp-143. The active-site Proton acceptor is Lys-183.

This sequence belongs to the class I-like SAM-binding methyltransferase superfamily. RNA methyltransferase RlmE family.

The protein localises to the cytoplasm. The catalysed reaction is uridine(2552) in 23S rRNA + S-adenosyl-L-methionine = 2'-O-methyluridine(2552) in 23S rRNA + S-adenosyl-L-homocysteine + H(+). In terms of biological role, specifically methylates the uridine in position 2552 of 23S rRNA at the 2'-O position of the ribose in the fully assembled 50S ribosomal subunit. This chain is Ribosomal RNA large subunit methyltransferase E, found in Rickettsia akari (strain Hartford).